The following is a 262-amino-acid chain: Aminoglycoside (3'') (9) adenylyltransferase (262 aa).

It catalyses the reaction streptomycin + ATP = 3''-O-adenylylstreptomycin + diphosphate. The catalysed reaction is spectinomycin + ATP = 9-O-adenylylspectinomycin + diphosphate. Its function is as follows. Mediates bacterial resistance to the antibiotics streptomycin and spectinomycin. This chain is Aminoglycoside (3'') (9) adenylyltransferase, found in Klebsiella pneumoniae.